We begin with the raw amino-acid sequence, 693 residues long: Translation factor GUF1 homolog, mitochondrial (693 aa).

Polar residues predominate over residues 51–63 (SSSSTEKPTTSGT). Residues 51-78 (SSSSTEKPTTSGTINGGGGKQKAASQPK) are disordered. The tr-type G domain maps to 88–270 (QKIRNFSIIA…RIVQMVPPPP (183 aa)). Residues 97–104 (AHIDHGKS), 163–167 (DTPGH), and 217–220 (NKID) each bind GTP.

This sequence belongs to the TRAFAC class translation factor GTPase superfamily. Classic translation factor GTPase family. LepA subfamily.

The protein resides in the mitochondrion inner membrane. It catalyses the reaction GTP + H2O = GDP + phosphate + H(+). Promotes mitochondrial protein synthesis. May act as a fidelity factor of the translation reaction, by catalyzing a one-codon backward translocation of tRNAs on improperly translocated ribosomes. Binds to mitochondrial ribosomes in a GTP-dependent manner. This Phaeodactylum tricornutum (strain CCAP 1055/1) protein is Translation factor GUF1 homolog, mitochondrial.